Consider the following 409-residue polypeptide: MVDFKTVQAFDFQGKTVVLRADLNVPMKDGVITDNERILASLDTIKYLLGHNCKIVLLSHLSRVKSLDDKKGKKSLQPVASALQNLLKNTKVHFCPENTGDKVKVAVNQLPLGEILVLENTRYCDVNEAGEVVKHESKNNAELAQFWASLGDIFVNDAFGTAHRRHASNAGIAKYIKNSCIGLLMERELINLYRLINNPPKPFVVVLGGAKVSDKLQVVNNLFKIADHILIGGGMVNTFLKALGNEVGTSLVEEDLVQTAKQILDSDKDKKIVLGVDQMLHASFKDEPGVECVVAPQWPAELQGFMSLDVGSKTVALFSSYLAKAKTIFWNGPMGVFEFSNYAQGTLAIGKAIAQNQQAFSVIGGGDSAAAAKQLQIADQFSFISTGGGASLALIGGEELVGISDIQKK.

Residues aspartate 22–asparagine 24, arginine 37, histidine 60–arginine 63, arginine 122, and arginine 164 each bind substrate. ATP-binding positions include lysine 215, glutamate 338, and glycine 365 to serine 368.

Belongs to the phosphoglycerate kinase family. In terms of assembly, monomer.

It is found in the cytoplasm. It catalyses the reaction (2R)-3-phosphoglycerate + ATP = (2R)-3-phospho-glyceroyl phosphate + ADP. The protein operates within carbohydrate degradation; glycolysis; pyruvate from D-glyceraldehyde 3-phosphate: step 2/5. The polypeptide is Phosphoglycerate kinase (pgk) (Mycoplasma pneumoniae (strain ATCC 29342 / M129 / Subtype 1) (Mycoplasmoides pneumoniae)).